We begin with the raw amino-acid sequence, 519 residues long: Sorting nexin-2 (519 aa).

Residues Ser30–Glu50 show a composition bias toward low complexity. The disordered stretch occupies residues Ser30 to Val62. At Ser97 the chain carries Phosphoserine. Phosphothreonine is present on residues Thr101 and Thr104. Ser117 and Ser119 each carry phosphoserine. The PX domain occupies Phe140–Arg269. A 1,2-diacyl-sn-glycero-3-phospho-(1D-myo-inositol-3-phosphate) contacts are provided by Arg183, Ser185, Lys211, and Arg235. Ser185 is modified (phosphoserine). An interaction with RhoG region spans residues Gln260–Ala519. Ser277 carries the post-translational modification Phosphoserine. Positions Gly278–Met295 are membrane-binding amphipathic helix. The region spanning Met299–Ala519 is the BAR domain. Lys469 is subject to N6-acetyllysine.

The protein belongs to the sorting nexin family. In terms of assembly, predominantly forms heterodimers with BAR domain-containing sorting nexins SNX5, SNX6 and SNX32; can self-associate to form homodimers. The heterodimers are proposed to self-assemble into helical arrays on the membrane to stabilize and expand local membrane curvature underlying endosomal tubule formation. Thought to be a component of the originally described retromer complex (also called SNX-BAR retromer) which is a pentamer containing the heterotrimeric retromer cargo-selective complex (CSC), also described as vacuolar protein sorting subcomplex (VPS), and a heterodimeric membrane-deforming subcomplex formed between SNX1 or SNX2 and SNX5 or SNX6 (also called SNX-BAR subcomplex); the respective CSC and SNX-BAR subcomplexes associate with low affinity. Interacts with SNX5, SNX6, SNX32, VPS26A, VPS29, VPS35, FNBP1, KALRN, RHOG (GDP-bound form).

It is found in the early endosome membrane. The protein resides in the cell projection. Its subcellular location is the lamellipodium. In terms of biological role, involved in several stages of intracellular trafficking. Interacts with membranes containing phosphatidylinositol 3-phosphate (PtdIns(3P)) or phosphatidylinositol 3,5-bisphosphate (PtdIns(3,5)P2). Acts in part as component of the retromer membrane-deforming SNX-BAR subcomplex. The SNX-BAR retromer mediates retrograde transport of cargo proteins from endosomes to the trans-Golgi network (TGN) and is involved in endosome-to-plasma membrane transport for cargo protein recycling. The SNX-BAR subcomplex functions to deform the donor membrane into a tubular profile called endosome-to-TGN transport carrier (ETC). Can sense membrane curvature and has in vitro vesicle-to-membrane remodeling activity. Required for retrograde endosome-to-TGN transport of TGN38. Promotes KALRN- and RHOG-dependent but retromer-independent membrane remodeling such as lamellipodium formation; the function is dependent on GEF activity of KALRN. The sequence is that of Sorting nexin-2 (Snx2) from Mus musculus (Mouse).